Reading from the N-terminus, the 346-residue chain is E3 ubiquitin-protein ligase MARCHF9 (346 aa).

2 disordered regions span residues 20 to 39 (GGGR…GGCG) and 47 to 92 (STRD…PGAL). The span at 63–75 (PRARGLAGDKEPR) shows a compositional bias: basic and acidic residues. The segment covering 77 to 90 (GPLPPPAPPLPPPG) has biased composition (pro residues). The RING-CH-type zinc finger occupies 102–162 (DSGLRTPQCR…ELCYFKYQVL (61 aa)). Residues Cys-110, Cys-113, Cys-126, Cys-128, His-136, Cys-139, Cys-152, and Cys-155 each coordinate Zn(2+). Helical transmembrane passes span 185–205 (IAAI…LIWS) and 219–239 (LFQI…GLII). Disordered regions lie at residues 273–301 (DAGG…RPPA) and 326–346 (PPDA…VTTV). A compositionally biased stretch (polar residues) spans 284–296 (PRNSRTGPTSGAT).

As to quaternary structure, homodimer. In terms of tissue distribution, ubiquitously expressed.

It localises to the golgi apparatus membrane. The protein localises to the lysosome membrane. The enzyme catalyses S-ubiquitinyl-[E2 ubiquitin-conjugating enzyme]-L-cysteine + [acceptor protein]-L-lysine = [E2 ubiquitin-conjugating enzyme]-L-cysteine + N(6)-ubiquitinyl-[acceptor protein]-L-lysine.. It functions in the pathway protein modification; protein ubiquitination. Functionally, E3 ubiquitin-protein ligase that may mediate ubiquitination of MHC-I, CD4 and ICAM1, and promote their subsequent endocytosis and sorting to lysosomes via multivesicular bodies. E3 ubiquitin ligases accept ubiquitin from an E2 ubiquitin-conjugating enzyme in the form of a thioester and then directly transfer the ubiquitin to targeted substrates. The polypeptide is E3 ubiquitin-protein ligase MARCHF9 (Homo sapiens (Human)).